The primary structure comprises 71 residues: Ribosome modulation factor (71 aa).

It belongs to the ribosome modulation factor family.

The protein localises to the cytoplasm. Its function is as follows. During stationary phase, converts 70S ribosomes to an inactive dimeric form (100S ribosomes). This Pseudomonas savastanoi pv. phaseolicola (strain 1448A / Race 6) (Pseudomonas syringae pv. phaseolicola (strain 1448A / Race 6)) protein is Ribosome modulation factor.